A 427-amino-acid polypeptide reads, in one-letter code: 3-isopropylmalate dehydratase large subunit (427 aa).

Residues C308, C368, and C371 each coordinate [4Fe-4S] cluster.

It belongs to the aconitase/IPM isomerase family. LeuC type 2 subfamily. As to quaternary structure, heterodimer of LeuC and LeuD. The cofactor is [4Fe-4S] cluster.

It carries out the reaction (2R,3S)-3-isopropylmalate = (2S)-2-isopropylmalate. Its pathway is amino-acid biosynthesis; L-leucine biosynthesis; L-leucine from 3-methyl-2-oxobutanoate: step 2/4. In terms of biological role, catalyzes the isomerization between 2-isopropylmalate and 3-isopropylmalate, via the formation of 2-isopropylmaleate. This Geobacter sulfurreducens (strain ATCC 51573 / DSM 12127 / PCA) protein is 3-isopropylmalate dehydratase large subunit.